A 464-amino-acid chain; its full sequence is 3-isopropylmalate dehydratase large subunit (464 aa).

Positions 345, 405, and 408 each coordinate [4Fe-4S] cluster.

This sequence belongs to the aconitase/IPM isomerase family. LeuC type 1 subfamily. As to quaternary structure, heterodimer of LeuC and LeuD. Requires [4Fe-4S] cluster as cofactor.

The catalysed reaction is (2R,3S)-3-isopropylmalate = (2S)-2-isopropylmalate. It functions in the pathway amino-acid biosynthesis; L-leucine biosynthesis; L-leucine from 3-methyl-2-oxobutanoate: step 2/4. In terms of biological role, catalyzes the isomerization between 2-isopropylmalate and 3-isopropylmalate, via the formation of 2-isopropylmaleate. The polypeptide is 3-isopropylmalate dehydratase large subunit (Flavobacterium johnsoniae (strain ATCC 17061 / DSM 2064 / JCM 8514 / BCRC 14874 / CCUG 350202 / NBRC 14942 / NCIMB 11054 / UW101) (Cytophaga johnsonae)).